Here is a 141-residue protein sequence, read N- to C-terminus: Hemoglobin subunit alpha-1 (141 aa).

The Globin domain maps to 1–141; it reads VLTDEDKARV…LSKDLVSKYR (141 aa). Histidine 58 is a binding site for O2. Position 87 (histidine 87) interacts with heme b.

Belongs to the globin family. Heterotetramer of two alpha chains and two beta chains. In terms of tissue distribution, red blood cells.

In terms of biological role, involved in oxygen transport from the lung to the various peripheral tissues. This chain is Hemoglobin subunit alpha-1, found in Naja naja (Indian cobra).